The chain runs to 327 residues: G-protein coupled receptor 55 (327 aa).

The Extracellular portion of the chain corresponds to 1-20; sequence MSQPERDNCSFDSVDKLTRT. A glycan (N-linked (GlcNAc...) asparagine) is linked at Asn8. The chain crosses the membrane as a helical span at residues 21-41; sequence LQLAVHIPTFLLGLVLNLLAI. Over 42 to 57 the chain is Cytoplasmic; it reads RGFSAFLKKRKLDYIA. Residues 58 to 78 traverse the membrane as a helical segment; the sequence is TSIYMINLAVFDLLLVLSLPF. The Extracellular segment spans residues 79-93; that stretch reads KMVLPQVESPLPSFC. The chain crosses the membrane as a helical span at residues 94–114; the sequence is TLVECLYFISMYGSVFTICFI. Residues 115 to 136 are Cytoplasmic-facing; the sequence is SLDRFLAIQYPILASHLRSPRK. Residues 137–157 traverse the membrane as a helical segment; that stretch reads TFGICCIIWMLVWIGSIPIYT. The Extracellular segment spans residues 158 to 179; that stretch reads FHREVERYKCFHNMSDVTWSAS. N-linked (GlcNAc...) asparagine glycosylation occurs at Asn170. A helical membrane pass occupies residues 180–200; it reads VFFPLEIFGFLLPMGIMGFCS. Residues 201–239 are Cytoplasmic-facing; the sequence is YRSIHILLRRPDSTEDWVQQRDTKGWVQKRACIWTIATN. A helical transmembrane segment spans residues 240–260; that stretch reads LVIFVVSFLPVHLGFFLQYLV. The Extracellular segment spans residues 261 to 279; sequence RNRFILDCRMKQGISLFLQ. A helical transmembrane segment spans residues 280–300; sequence LSLCFSNINCCLDVFCYYFVI. Residues 301–327 lie on the Cytoplasmic side of the membrane; sequence KEFRMRIKAHRPSTIKLVNQDTMVSRG.

Belongs to the G-protein coupled receptor 1 family. Highly expressed in splenic plasma cells.

It localises to the cell membrane. Its function is as follows. G-protein coupled receptor that binds to several ligands including 2-arachidonoyl lysophosphatidylinositol or lysophosphatidylglucoside with high affinity, leading to rapid and transient activation of numerous intracellular signaling pathways. Induces the Ca(2+) release from intracellular stores via ERK, the heterotrimeric G protein GNA13 and RHOA leading to morphological changes including cell rounding and stress fiber formation. In macrophages, acts downstream of lysophosphatidylglucoside to inhibit the translocation of the phospholipid-transporting ABCA1 to plasma membrane and subsequent cholesterol efflux leading to lipid accumulation and foam cell formation. May be involved in hyperalgesia associated with inflammatory and neuropathic pain. This is G-protein coupled receptor 55 (Gpr55) from Mus musculus (Mouse).